The following is a 207-amino-acid chain: dITP/XTP pyrophosphatase (207 aa).

Thr11–Lys16 contributes to the substrate binding site. Residue Asp72 is the Proton acceptor of the active site. Asp72 contacts Mg(2+). Residues Ser73, Phe154–Asp157, Lys177, and His182–Arg183 each bind substrate.

Belongs to the HAM1 NTPase family. Homodimer. Requires Mg(2+) as cofactor.

It catalyses the reaction XTP + H2O = XMP + diphosphate + H(+). The catalysed reaction is dITP + H2O = dIMP + diphosphate + H(+). It carries out the reaction ITP + H2O = IMP + diphosphate + H(+). Its function is as follows. Pyrophosphatase that catalyzes the hydrolysis of nucleoside triphosphates to their monophosphate derivatives, with a high preference for the non-canonical purine nucleotides XTP (xanthosine triphosphate), dITP (deoxyinosine triphosphate) and ITP. Seems to function as a house-cleaning enzyme that removes non-canonical purine nucleotides from the nucleotide pool, thus preventing their incorporation into DNA/RNA and avoiding chromosomal lesions. The protein is dITP/XTP pyrophosphatase of Thermus thermophilus (strain ATCC BAA-163 / DSM 7039 / HB27).